Reading from the N-terminus, the 220-residue chain is Chaperone protein TorD (220 aa).

Belongs to the TorD/DmsD family. TorD subfamily.

The protein localises to the cytoplasm. Its function is as follows. Involved in the biogenesis of TorA. Acts on TorA before the insertion of the molybdenum cofactor and, as a result, probably favors a conformation of the apoenzyme that is competent for acquiring the cofactor. The chain is Chaperone protein TorD from Vibrio cholerae serotype O1 (strain ATCC 39541 / Classical Ogawa 395 / O395).